The sequence spans 431 residues: ORC1-type DNA replication protein 14 (431 aa).

ATP-binding positions include 62 to 66, tyrosine 219, and arginine 231; that span reads TGKSL.

This sequence belongs to the CDC6/cdc18 family.

Its function is as follows. Involved in regulation of DNA replication. The protein is ORC1-type DNA replication protein 14 (cdc6n) of Haloarcula marismortui (strain ATCC 43049 / DSM 3752 / JCM 8966 / VKM B-1809) (Halobacterium marismortui).